A 555-amino-acid chain; its full sequence is Membrane protein insertase YidC (555 aa).

Residues 7 to 24 form a helical membrane-spanning segment; it reads ILWVIFSMSLVLLYDNWQ. 2 stretches are compositionally biased toward low complexity: residues 40–54 and 64–81; these read QQAA…TPQA and AAPG…QPVG. The tract at residues 40–81 is disordered; sequence QQAAPAGAGGATPQADVPKANATNAAPGTVPAAPQAAAQPVG. A run of 5 helical transmembrane segments spans residues 334-354, 360-380, 430-450, 468-488, and 503-523; these read LELV…FWLL, FLGN…LVFF, LGGC…YWVL, LSVP…MFVQ, and VMMI…AGLV.

The protein belongs to the OXA1/ALB3/YidC family. Type 1 subfamily. Interacts with the Sec translocase complex via SecD. Specifically interacts with transmembrane segments of nascent integral membrane proteins during membrane integration.

It is found in the cell inner membrane. Required for the insertion and/or proper folding and/or complex formation of integral membrane proteins into the membrane. Involved in integration of membrane proteins that insert both dependently and independently of the Sec translocase complex, as well as at least some lipoproteins. Aids folding of multispanning membrane proteins. This chain is Membrane protein insertase YidC, found in Cupriavidus metallidurans (strain ATCC 43123 / DSM 2839 / NBRC 102507 / CH34) (Ralstonia metallidurans).